Reading from the N-terminus, the 261-residue chain is Small ribosomal subunit protein eS1 (261 aa).

Residues 1–18 are compositionally biased toward basic residues; the sequence is MAVGKNKRISKGKKGGKK. Residues 1–21 form a disordered region; sequence MAVGKNKRISKGKKGGKKKAT.

This sequence belongs to the eukaryotic ribosomal protein eS1 family. Component of the small ribosomal subunit. Mature ribosomes consist of a small (40S) and a large (60S) subunit. The 40S subunit contains about 33 different proteins and 1 molecule of RNA (18S). The 60S subunit contains about 49 different proteins and 3 molecules of RNA (25S, 5.8S and 5S).

It is found in the cytoplasm. This chain is Small ribosomal subunit protein eS1 (cyc07), found in Daucus carota (Wild carrot).